The chain runs to 185 residues: Elongation factor P (185 aa).

It belongs to the elongation factor P family.

It localises to the cytoplasm. Its pathway is protein biosynthesis; polypeptide chain elongation. Functionally, involved in peptide bond synthesis. Stimulates efficient translation and peptide-bond synthesis on native or reconstituted 70S ribosomes in vitro. Probably functions indirectly by altering the affinity of the ribosome for aminoacyl-tRNA, thus increasing their reactivity as acceptors for peptidyl transferase. The polypeptide is Elongation factor P (Thermosynechococcus vestitus (strain NIES-2133 / IAM M-273 / BP-1)).